Consider the following 122-residue polypeptide: Holo-[acyl-carrier-protein] synthase (122 aa).

Mg(2+) is bound by residues aspartate 8 and glutamate 57.

Belongs to the P-Pant transferase superfamily. AcpS family. Requires Mg(2+) as cofactor.

The protein localises to the cytoplasm. It catalyses the reaction apo-[ACP] + CoA = holo-[ACP] + adenosine 3',5'-bisphosphate + H(+). In terms of biological role, transfers the 4'-phosphopantetheine moiety from coenzyme A to a Ser of acyl-carrier-protein. This is Holo-[acyl-carrier-protein] synthase from Exiguobacterium sp. (strain ATCC BAA-1283 / AT1b).